We begin with the raw amino-acid sequence, 510 residues long: Cytochrome P450 monooxygenase macH (510 aa).

The helical transmembrane segment at 7-29 threads the bilayer; sequence LPVSLWLIAAGTFAVYHAIRAVY. Cysteine 454 provides a ligand contact to heme.

It belongs to the cytochrome P450 family. Requires heme as cofactor.

Its subcellular location is the membrane. Its pathway is secondary metabolite biosynthesis; terpenoid biosynthesis. Functionally, cytochrome P450 monooxygenase; part of the gene cluster that mediates the biosynthesis of macrophorins, isoprenoid epoxycyclohexenones containing cyclized drimane moieties. The first step of the pathway is the synthesis of 6-methylsalicylic acid (6-MSA) by the polyketide synthase macA. 6-MSA is then converted to m-cresol by the decarboxylase macB. The cytochrome P450 monooxygenase macC then catalyzes the oxidation of m-cresol to toluquinol. Epoxidation of toluquinol is then performed by the short chain dehydrogenase macD, with the help of macE, and a further prenylation by macG leads to 7-deacetoxyyanuthone A. The next step is the hydroxylation of C-22 of 7-deacetoxyyanuthone A by the cytochrome P450 monooxygenase macH to yield 22-deacetylyanuthone A. O-Mevalon transferase macI then attaches mevalon to the hydroxyl group of 22-deacetylyanuthone A to produce yanuthone E. The terpene cyclase macJ catalyzes the cyclization of 22-deacetylyanuthone A to macrophorin A. MacJ is also able to catalyze cyclization of yanuthone E and 7-deacetoxyyanuthone A to their corresponding macrophorins. The macJ products can be further modified by macH and macJ, as well as by the FAD-dependent monooxygenase macF, to produce additional macrophorins, including 4'-oxomacrophorin A, 4'-oxomacrophorin D and 4'-oxomacrophorin E. The sequence is that of Cytochrome P450 monooxygenase macH from Penicillium terrestre.